A 673-amino-acid chain; its full sequence is Beta-galactosidase GalA (673 aa).

Arg105 is a binding site for substrate. Cys109 contributes to the Zn(2+) binding site. Asn143 serves as a coordination point for substrate. Catalysis depends on Glu144, which acts as the Proton donor. Zn(2+) is bound by residues Cys149, Cys151, and Cys154. Glu308 functions as the Nucleophile in the catalytic mechanism. Substrate contacts are provided by residues Trp316 and 356 to 359; that span reads EKFH.

Belongs to the glycosyl hydrolase 42 family. In terms of assembly, homodimer.

It carries out the reaction Hydrolysis of terminal non-reducing beta-D-galactose residues in beta-D-galactosides.. Inhibited by hydrolysis end products D-galactose and D-glucose. The hydrolysis of o-nitrophenyl-beta-D-galactopyranoside (ONPG) is slightly activated by monovalent ions, Na(+) and K(+). Concentrations of these ions in the range of 1-100 mM exert the stimulating effects. The presence of 1 mM Mn(2+) together with the presence of 10 mM Na(+) slightly stimulates the activity, while presence of 10 mM Mn(2+) inhibits the activity by about 40%. Catalyzes the hydrolysis of lactose to its constituent monosaccharides glucose and galactose. Possesses a low level of transgalactosylation activity for the production of galacto-oligosaccharides (GOS) from lactose. This is Beta-galactosidase GalA from Bacillus licheniformis (strain ATCC 14580 / DSM 13 / JCM 2505 / CCUG 7422 / NBRC 12200 / NCIMB 9375 / NCTC 10341 / NRRL NRS-1264 / Gibson 46).